The following is a 95-amino-acid chain: Protein TusB (95 aa).

It belongs to the DsrH/TusB family. As to quaternary structure, heterohexamer, formed by a dimer of trimers. The hexameric TusBCD complex contains 2 copies each of TusB, TusC and TusD. The TusBCD complex interacts with TusE.

The protein resides in the cytoplasm. Its function is as follows. Part of a sulfur-relay system required for 2-thiolation of 5-methylaminomethyl-2-thiouridine (mnm(5)s(2)U) at tRNA wobble positions. This chain is Protein TusB, found in Shigella dysenteriae serotype 1 (strain Sd197).